The sequence spans 224 residues: 7-cyano-7-deazaguanine synthase (224 aa).

14-24 contacts ATP; the sequence is FSGGQDSTTCL. Residues Cys-190, Cys-198, Cys-201, and Cys-204 each contribute to the Zn(2+) site.

Belongs to the QueC family. Zn(2+) serves as cofactor.

It carries out the reaction 7-carboxy-7-deazaguanine + NH4(+) + ATP = 7-cyano-7-deazaguanine + ADP + phosphate + H2O + H(+). It functions in the pathway purine metabolism; 7-cyano-7-deazaguanine biosynthesis. Its function is as follows. Catalyzes the ATP-dependent conversion of 7-carboxy-7-deazaguanine (CDG) to 7-cyano-7-deazaguanine (preQ(0)). The sequence is that of 7-cyano-7-deazaguanine synthase from Haemophilus ducreyi (strain 35000HP / ATCC 700724).